The sequence spans 143 residues: Peptide methionine sulfoxide reductase B8 (143 aa).

Residues 18-139 form the MsrB domain; that stretch reads DEEWRAVLSP…NSVSLKFASA (122 aa). Zn(2+)-binding residues include cysteine 57, cysteine 60, cysteine 103, and cysteine 106. Residues cysteine 75 and cysteine 128 are joined by a disulfide bond. Cysteine 128 (nucleophile) is an active-site residue.

This sequence belongs to the MsrB Met sulfoxide reductase family. The cofactor is Zn(2+).

The protein resides in the cytoplasm. It localises to the cytosol. The catalysed reaction is L-methionyl-[protein] + [thioredoxin]-disulfide + H2O = L-methionyl-(R)-S-oxide-[protein] + [thioredoxin]-dithiol. Functionally, catalyzes the reduction of methionine sulfoxide (MetSO) to methionine in proteins. Plays a protective role against oxidative stress by restoring activity to proteins that have been inactivated by methionine oxidation. MSRB family specifically reduces the MetSO R-enantiomer. The protein is Peptide methionine sulfoxide reductase B8 (MSRB8) of Arabidopsis thaliana (Mouse-ear cress).